The primary structure comprises 237 residues: Ribosomal RNA small subunit methyltransferase G (237 aa).

S-adenosyl-L-methionine-binding positions include Gly76, Phe81, 128 to 129 (VE), and Arg147.

This sequence belongs to the methyltransferase superfamily. RNA methyltransferase RsmG family.

It localises to the cytoplasm. Functionally, specifically methylates the N7 position of a guanine in 16S rRNA. The polypeptide is Ribosomal RNA small subunit methyltransferase G (Prochlorococcus marinus (strain MIT 9215)).